The following is a 346-amino-acid chain: Proto-oncogene serine/threonine-protein kinase mos (346 aa).

The 282-residue stretch at 60 to 341 (VCLLQRLGAG…RPLLVDLTSL (282 aa)) folds into the Protein kinase domain. Residues 66–74 (LGAGGFGSV) and K87 each bind ATP. D201 serves as the catalytic Proton acceptor.

The protein belongs to the protein kinase superfamily. Ser/Thr protein kinase family.

It catalyses the reaction L-seryl-[protein] + ATP = O-phospho-L-seryl-[protein] + ADP + H(+). The catalysed reaction is L-threonyl-[protein] + ATP = O-phospho-L-threonyl-[protein] + ADP + H(+). This is Proto-oncogene serine/threonine-protein kinase mos from Chlorocebus aethiops (Green monkey).